We begin with the raw amino-acid sequence, 146 residues long: Late protein OPG112 (146 aa).

A helical transmembrane segment spans residues 10–31 (LAMTAFFGELNTLDIMALIMSI).

The protein belongs to the orthopoxvirus OPG112 family.

The protein localises to the host membrane. The protein resides in the host cytoplasm. In terms of biological role, contributes to the formation of crescents and immature virions (IV). Interacts with phosphatidylinositol-3-phosphate (PI3P) and phosphatidylinositol-4-phosphate (PI4P) lipids in order to form virion membranes. Mechanistically, mediates proper formation of OPG125-hexamers, and hence the honey comb lattice and spherical immature virus. This Cynomys gunnisoni (Gunnison's prairie dog) protein is Late protein OPG112 (OPG112).